We begin with the raw amino-acid sequence, 160 residues long: Transcriptional regulator MraZ (160 aa).

SpoVT-AbrB domains are found at residues 5–50 (KFDT…GDQV) and 93–136 (AVEC…SQAV).

This sequence belongs to the MraZ family. As to quaternary structure, forms oligomers.

Its subcellular location is the cytoplasm. The protein localises to the nucleoid. The chain is Transcriptional regulator MraZ from Geobacter sp. (strain M21).